The primary structure comprises 311 residues: tRNA-cytidine(32) 2-sulfurtransferase (311 aa).

Positions 47-52 match the PP-loop motif motif; the sequence is SGGKDS. 3 residues coordinate [4Fe-4S] cluster: cysteine 122, cysteine 125, and cysteine 213.

It belongs to the TtcA family. As to quaternary structure, homodimer. Requires Mg(2+) as cofactor. [4Fe-4S] cluster serves as cofactor.

It localises to the cytoplasm. It catalyses the reaction cytidine(32) in tRNA + S-sulfanyl-L-cysteinyl-[cysteine desulfurase] + AH2 + ATP = 2-thiocytidine(32) in tRNA + L-cysteinyl-[cysteine desulfurase] + A + AMP + diphosphate + H(+). The protein operates within tRNA modification. In terms of biological role, catalyzes the ATP-dependent 2-thiolation of cytidine in position 32 of tRNA, to form 2-thiocytidine (s(2)C32). The sulfur atoms are provided by the cysteine/cysteine desulfurase (IscS) system. The protein is tRNA-cytidine(32) 2-sulfurtransferase of Salmonella typhi.